The following is an 895-amino-acid chain: Microsomal triglyceride transfer protein large subunit (895 aa).

The N-terminal stretch at 1-18 (MILLAVLFLCFFSSYSAS) is a signal peptide. Residues 28–659 (LNNERLYKLT…VFQYLGKAGL (632 aa)) form the Vitellogenin domain. C174 and C194 form a disulfide bridge.

Heterodimer; heterodimerizes with the protein disulfide isomerase (P4HB/PDI). Interacts with APOB. Interacts with PRAP1.

It is found in the endoplasmic reticulum. The protein resides in the golgi apparatus. The enzyme catalyses a 1,2-diacyl-sn-glycero-3-phosphocholine(in) = a 1,2-diacyl-sn-glycero-3-phosphocholine(out). It catalyses the reaction a 1,2-diacyl-sn-glycero-3-phosphoethanolamine(in) = a 1,2-diacyl-sn-glycero-3-phosphoethanolamine(out). It carries out the reaction a cholesterol ester(in) = a cholesterol ester(out). The catalysed reaction is a triacyl-sn-glycerol(in) = a triacyl-sn-glycerol(out). Functionally, catalyzes the transport of triglyceride, cholesteryl ester, and phospholipid between phospholipid surfaces. Required for the assembly and secretion of plasma lipoproteins that contain apolipoprotein B. May be involved in regulating cholesteryl ester biosynthesis in cells that produce lipoproteins. In Mesocricetus auratus (Golden hamster), this protein is Microsomal triglyceride transfer protein large subunit (MTTP).